Consider the following 269-residue polypeptide: Formamidopyrimidine-DNA glycosylase (269 aa).

The active-site Schiff-base intermediate with DNA is the Pro-2. The active-site Proton donor is the Glu-3. Lys-57 (proton donor; for beta-elimination activity) is an active-site residue. DNA is bound by residues His-90, Arg-109, and Lys-150. Residues Gln-235–Lys-269 form an FPG-type zinc finger. The active-site Proton donor; for delta-elimination activity is the Arg-259.

The protein belongs to the FPG family. As to quaternary structure, monomer. The cofactor is Zn(2+).

The enzyme catalyses Hydrolysis of DNA containing ring-opened 7-methylguanine residues, releasing 2,6-diamino-4-hydroxy-5-(N-methyl)formamidopyrimidine.. It carries out the reaction 2'-deoxyribonucleotide-(2'-deoxyribose 5'-phosphate)-2'-deoxyribonucleotide-DNA = a 3'-end 2'-deoxyribonucleotide-(2,3-dehydro-2,3-deoxyribose 5'-phosphate)-DNA + a 5'-end 5'-phospho-2'-deoxyribonucleoside-DNA + H(+). Functionally, involved in base excision repair of DNA damaged by oxidation or by mutagenic agents. Acts as a DNA glycosylase that recognizes and removes damaged bases. Has a preference for oxidized purines, such as 7,8-dihydro-8-oxoguanine (8-oxoG). Has AP (apurinic/apyrimidinic) lyase activity and introduces nicks in the DNA strand. Cleaves the DNA backbone by beta-delta elimination to generate a single-strand break at the site of the removed base with both 3'- and 5'-phosphates. In Escherichia coli O157:H7, this protein is Formamidopyrimidine-DNA glycosylase.